The sequence spans 601 residues: Elongation factor 4 (601 aa).

The tr-type G domain occupies 8–189; the sequence is EQIRNFGIIA…LIVRKAPPPK (182 aa). Residue 20–25 participates in GTP binding; the sequence is DHGKST.

This sequence belongs to the TRAFAC class translation factor GTPase superfamily. Classic translation factor GTPase family. LepA subfamily.

The protein resides in the cell membrane. The enzyme catalyses GTP + H2O = GDP + phosphate + H(+). Required for accurate and efficient protein synthesis under certain stress conditions. May act as a fidelity factor of the translation reaction, by catalyzing a one-codon backward translocation of tRNAs on improperly translocated ribosomes. Back-translocation proceeds from a post-translocation (POST) complex to a pre-translocation (PRE) complex, thus giving elongation factor G a second chance to translocate the tRNAs correctly. Binds to ribosomes in a GTP-dependent manner. The sequence is that of Elongation factor 4 from Tropheryma whipplei (strain TW08/27) (Whipple's bacillus).